The chain runs to 217 residues: MSFVPREAVEQAVKEALEISPKRNFKQSVDLIVVLRDIDLRSPQGRIREVVILPHPPKKHVRICVAADGDMAVKAKEVADRVLTREELQGLVGNRKAAKKIAEFCDWVIVKADLMPLVGRTLAPALGPRGKVPIPVPPNANIAEIVKTYRSAVMLRAKDQPQVMCRVGTEDMPVNEIVDNIFKVLSTLEGKLPNARHNIAKVIVKLTMGPPVEVKLR.

Belongs to the universal ribosomal protein uL1 family. In terms of assembly, part of the 50S ribosomal subunit.

Binds directly to 23S rRNA. Probably involved in E site tRNA release. Functionally, protein L1 is also a translational repressor protein, it controls the translation of its operon by binding to its mRNA. The chain is Large ribosomal subunit protein uL1 from Hyperthermus butylicus (strain DSM 5456 / JCM 9403 / PLM1-5).